A 146-amino-acid chain; its full sequence is uncharacterized protein (146 aa).

This is an uncharacterized protein from Bacillus subtilis (strain 168).